A 276-amino-acid chain; its full sequence is Energy-coupling factor transporter ATP-binding protein EcfA1 (276 aa).

Positions 2–237 (IEIKNLKFKY…GSELVDLGLD (236 aa)) constitute an ABC transporter domain. 37–44 (GHNGSGKS) provides a ligand contact to ATP.

The protein belongs to the ABC transporter superfamily. Energy-coupling factor EcfA family. Forms a stable energy-coupling factor (ECF) transporter complex composed of 2 membrane-embedded substrate-binding proteins (S component), 2 ATP-binding proteins (A component) and 2 transmembrane proteins (T component).

It is found in the cell membrane. In terms of biological role, ATP-binding (A) component of a common energy-coupling factor (ECF) ABC-transporter complex. Unlike classic ABC transporters this ECF transporter provides the energy necessary to transport a number of different substrates. This chain is Energy-coupling factor transporter ATP-binding protein EcfA1, found in Streptococcus thermophilus (strain ATCC BAA-491 / LMD-9).